The following is a 103-amino-acid chain: Protein reprimo A (103 aa).

A helical membrane pass occupies residues 50–70 (IVQIAVMCVLSLTVVFGIFFL).

Belongs to the reprimo family.

The protein localises to the cytoplasm. Its subcellular location is the membrane. Functionally, may be involved in the regulation of p53-dependent G2 arrest of the cell cycle. This chain is Protein reprimo A, found in Danio rerio (Zebrafish).